We begin with the raw amino-acid sequence, 312 residues long: Glyoxylate/hydroxypyruvate reductase A (312 aa).

The active site involves Arg227. The Proton donor role is filled by His275.

This sequence belongs to the D-isomer specific 2-hydroxyacid dehydrogenase family. GhrA subfamily.

The protein localises to the cytoplasm. The enzyme catalyses glycolate + NADP(+) = glyoxylate + NADPH + H(+). It catalyses the reaction (R)-glycerate + NAD(+) = 3-hydroxypyruvate + NADH + H(+). It carries out the reaction (R)-glycerate + NADP(+) = 3-hydroxypyruvate + NADPH + H(+). Catalyzes the NADPH-dependent reduction of glyoxylate and hydroxypyruvate into glycolate and glycerate, respectively. The sequence is that of Glyoxylate/hydroxypyruvate reductase A from Escherichia coli O7:K1 (strain IAI39 / ExPEC).